A 145-amino-acid polypeptide reads, in one-letter code: 3-dehydroquinate dehydratase (145 aa).

Tyrosine 23 acts as the Proton acceptor in catalysis. Substrate-binding residues include asparagine 73, histidine 79, and aspartate 86. Histidine 99 acts as the Proton donor in catalysis. Residues 100-101 and arginine 110 contribute to the substrate site; that span reads LS.

This sequence belongs to the type-II 3-dehydroquinase family. Homododecamer.

The catalysed reaction is 3-dehydroquinate = 3-dehydroshikimate + H2O. It participates in metabolic intermediate biosynthesis; chorismate biosynthesis; chorismate from D-erythrose 4-phosphate and phosphoenolpyruvate: step 3/7. Functionally, catalyzes a trans-dehydration via an enolate intermediate. In Desulfitobacterium hafniense (strain DSM 10664 / DCB-2), this protein is 3-dehydroquinate dehydratase.